A 310-amino-acid chain; its full sequence is Cysteine synthase (310 aa).

K44 is modified (N6-(pyridoxal phosphate)lysine). Pyridoxal 5'-phosphate contacts are provided by residues N74, 179–183, and S267; that span reads GTGGT.

Belongs to the cysteine synthase/cystathionine beta-synthase family. The cofactor is pyridoxal 5'-phosphate.

The catalysed reaction is O-acetyl-L-serine + hydrogen sulfide = L-cysteine + acetate. The protein operates within amino-acid biosynthesis; L-cysteine biosynthesis; L-cysteine from L-serine: step 2/2. This Neisseria meningitidis serogroup B (strain ATCC BAA-335 / MC58) protein is Cysteine synthase (cysK).